The chain runs to 66 residues: uncharacterized protein (66 aa).

The first 25 residues, 1 to 25 (MIVIILLFISIIVFLSVIQPQPSKN), serve as a signal peptide directing secretion. A compositionally biased stretch (polar residues) spans 21–31 (QPSKNKSRQQA). Residues 21-66 (QPSKNKSRQQADSGYFGYSDHSSHHDGCSSDGGFSDSGCGGGGGGD) are disordered.

This is an uncharacterized protein from Bacillus subtilis (strain 168).